We begin with the raw amino-acid sequence, 75 residues long: Putative membrane protein insertion efficiency factor (75 aa).

This sequence belongs to the UPF0161 family.

It localises to the cell membrane. Functionally, could be involved in insertion of integral membrane proteins into the membrane. The polypeptide is Putative membrane protein insertion efficiency factor (Bacillus velezensis (strain DSM 23117 / BGSC 10A6 / LMG 26770 / FZB42) (Bacillus amyloliquefaciens subsp. plantarum)).